The chain runs to 660 residues: Secretin PulD (660 aa).

A signal peptide spans 1 to 27 (MIIANVIRSFSLTLLIFAALLFRPAAA). The segment at 28-124 (EEFSASFKGT…VASDAAPGIG (97 aa)) is N0. The N1 stretch occupies residues 126-190 (EVVTRVVPLT…TIVERVDNAG (65 aa)). Residues 191–264 (DRSVVTVPLS…MIKQLDRQQA (74 aa)) are N2. An N3 region spans residues 267–341 (GNTKVIYLKY…DLERVIAQLD (75 aa)). Residues 346 to 596 (QVLVEAIIAE…LFIRPTVIRD (251 aa)) form a secretin region. The tract at residues 598–660 (DEYRQASSGQ…IDAFNLGGNL (63 aa)) is s domain.

This sequence belongs to the bacterial secretin family. GSP D subfamily. Forms a cylindrical channel with 15 subunits.

It localises to the cell outer membrane. Involved in a type II secretion system (T2SS, formerly general secretion pathway, GSP) for the export of proteins. Required for the translocation of pullulanase. This subunit forms the outer membrane channel. This is Secretin PulD (pulD) from Klebsiella pneumoniae.